The chain runs to 339 residues: Spore coat polysaccharide biosynthesis protein SpsG (339 aa).

The helical transmembrane segment at 241–261 threads the bilayer; sequence IVAGGISLYEAICIGVPCLVL.

It to M.jannaschii MJ1062.

The protein resides in the cell membrane. It participates in spore coat biogenesis; spore coat polysaccharide biosynthesis. The sequence is that of Spore coat polysaccharide biosynthesis protein SpsG (spsG) from Bacillus subtilis (strain 168).